Consider the following 73-residue polypeptide: Ferredoxin-thioredoxin reductase, variable chain (73 aa).

An interaction with ferredoxin region spans residues 43-46; sequence NGKP.

This sequence belongs to the ferredoxin thioredoxin reductase alpha subunit family. Heterodimer of subunit A (variable subunit) and subunit B (catalytic subunit). Heterodimeric FTR forms a complex with ferredoxin and thioredoxin.

In terms of biological role, variable subunit of the ferredoxin-thioredoxin reductase (FTR), which catalyzes the two-electron reduction of thioredoxins by the electrons provided by reduced ferredoxin. In Synechococcus sp. (strain ATCC 27144 / PCC 6301 / SAUG 1402/1) (Anacystis nidulans), this protein is Ferredoxin-thioredoxin reductase, variable chain (ftrV).